Consider the following 629-residue polypeptide: Dehydrogenase pyvF (629 aa).

The first 22 residues, 1 to 22, serve as a signal peptide directing secretion; that stretch reads MAGSPFTTALLSAWTLSTVAVG. Residues 61 to 62 and 82 to 83 each bind FAD; these read AS and EA. N-linked (GlcNAc...) asparagine glycosylation is present at asparagine 92. 144-147 is an FAD binding site; sequence NLMA. Residues asparagine 172, asparagine 182, asparagine 256, asparagine 284, asparagine 312, and asparagine 421 are each glycosylated (N-linked (GlcNAc...) asparagine). The Proton acceptor role is filled by histidine 552. FAD contacts are provided by residues alanine 586 and 597–598; that span reads PL.

The protein belongs to the GMC oxidoreductase family. In terms of assembly, homodimer. It depends on FAD as a cofactor.

It participates in secondary metabolite biosynthesis. Dehydrogenase; part of the gene cluster that mediates the biosynthesis of pyranoviolin A, a pyranonigrin analog with a C-3 methoxy group. Initially, the PKS portion of pyvA synthesizes C-10 carbon chain from 5 molecules of malonyl-CoA, which is then condensed with the thiolation (T) domain-bound glycine activated by the adenylation (A) domain. The subsequent chain release by Dieckmann condensation (DKC) could be catalyzed by the TE domain present at the C-terminus of pyvA and/or the alpha/beta hydrolase pyvD, installing the tetramic acid moiety. The FAD-dependent monooxygenase pyvC next epoxidizes one of the olefins of the polyketide part, and the epoxide ring-opening induces the dihydro-gamma-pyrone ring formation. The cytochrome P450 monooxygeanse pyvB would be responsible for the 2 consecutive reactions, in which the dihydro-gamma-pyrone is oxidized to gamma-pyrone and C-7 is hydroxylated to yield pyranonigrin F. Finally, the O-methyltransferase pyvH methylates the C-3 hydroxy group to complete the biosynthesis. In Aspergillus violaceofuscus (strain CBS 115571), this protein is Dehydrogenase pyvF.